A 189-amino-acid chain; its full sequence is GTPase NRas (189 aa).

GTP-binding positions include 10–18 and 29–30; these read GAGGVGKSA and VD. The Effector region motif lies at 32–40; sequence YDPTIEDSY. Threonine 35 is a glycosylation site ((Microbial infection) O-linked (Glc) threonine; by P.sordellii toxin TcsL). 57–61 serves as a coordination point for GTP; sequence DTAGQ. Position 89 is a phosphoserine (serine 89). 116–119 is a binding site for GTP; it reads NKCD. A hypervariable region region spans residues 166–185; that stretch reads YRMKKLNSSDDGTQGCMGLP. A Glycyl lysine isopeptide (Lys-Gly) (interchain with G-Cter in ubiquitin) cross-link involves residue lysine 170. Cysteine 181 carries the S-palmitoyl cysteine lipid modification. A lipid anchor (S-farnesyl cysteine) is attached at cysteine 186. The propeptide at 187–189 is removed in mature form; it reads VVM.

The protein belongs to the small GTPase superfamily. Ras family. In terms of assembly, interacts (active GTP-bound form preferentially) with RGS14. Interacts (active GTP-bound form) with RASSF7. Interacts (active GTP-bound form) with both SHOC2 and PP1c (all isoforms) to form a tertiary complex; SHOC2 and PP1c preferably bind M-Ras/MRAS, but they also bind K-Ras/KRAS, N-Ras/NRAS and H-Ras/HRAS. Post-translationally, palmitoylated by the ZDHHC9-GOLGA7 complex. Depalmitoylated by ABHD17A, ABHD17B and ABHD17C. A continuous cycle of de- and re-palmitoylation regulates rapid exchange between plasma membrane and Golgi. In terms of processing, acetylation at Lys-104 prevents interaction with guanine nucleotide exchange factors (GEFs). Fatty-acylated at Lys-169 and/or Lys-170. Post-translationally, ubiquitinated by the BCR(LZTR1) E3 ubiquitin ligase complex at Lys-170 in a non-degradative manner, leading to inhibit Ras signaling by decreasing Ras association with membranes. In terms of processing, phosphorylation at Ser-89 enhances NRAS association with its downstream effectors. (Microbial infection) Glucosylated at Thr-35 by P.sordellii toxin TcsL.

The protein localises to the cell membrane. It is found in the golgi apparatus membrane. The enzyme catalyses GTP + H2O = GDP + phosphate + H(+). Its activity is regulated as follows. Alternates between an inactive form bound to GDP and an active form bound to GTP. Activated by a guanine nucleotide-exchange factor (GEF) and inactivated by a GTPase-activating protein (GAP). Functionally, ras proteins bind GDP/GTP and possess intrinsic GTPase activity. This chain is GTPase NRas (NRAS), found in Homo sapiens (Human).